A 365-amino-acid polypeptide reads, in one-letter code: Validamycin A dioxygenase (365 aa).

The 111-residue stretch at 174 to 284 (HATWTQSVNW…LVSLVYFFDA (111 aa)) folds into the Fe2OG dioxygenase domain. Residues H203, D205, and H261 each coordinate Fe cation. The tract at residues 331–365 (GELSLSRPGSADSPGSSPADDHPSRPGRHPAQGPQ) is disordered. The span at 336 to 348 (SRPGSADSPGSSP) shows a compositional bias: low complexity.

This sequence belongs to the iron/ascorbate-dependent oxidoreductase family. Fe(2+) serves as cofactor.

The catalysed reaction is validamycin A + 2-oxoglutarate + O2 = validamycin B + succinate + CO2 + H(+). The enzyme catalyses validoxylamine A + 2-oxoglutarate + O2 = validoxylamine B + succinate + CO2 + H(+). It participates in antibiotic biosynthesis. In terms of biological role, involved in the biosynthesis of validamycin B, a component of the antifungal and antibiotic validamycin complex used as a crop protectant. Catalyzes the regioselective hydroxylation of validamycin A (4-O-beta-D-glucopyranosyl-validoxylamine A) at the C-6 position to yield validamycin B. To a lesser extent, also able to convert validoxylamine A to its hydroxylated derivative. In Streptomyces hygroscopicus subsp. limoneus, this protein is Validamycin A dioxygenase.